Reading from the N-terminus, the 536-residue chain is CUGBP Elav-like family member 2 (536 aa).

RRM domains are found at residues 58 to 141, 150 to 230, and 451 to 529; these read IKMF…PADS, RKLF…FADT, and ANLF…LKRS.

It belongs to the CELF/BRUNOL family.

The protein localises to the nucleus. The protein resides in the cytoplasm. Functionally, RNA-binding protein implicated in the regulation of several post-transcriptional events. May be involved in pre-mRNA alternative splicing, mRNA translation repression and stability. The chain is CUGBP Elav-like family member 2 (celf2) from Xenopus laevis (African clawed frog).